The primary structure comprises 452 residues: UDP-N-acetylmuramoylalanine--D-glutamate ligase (452 aa).

Position 119–125 (119–125 (GSNGKTT)) interacts with ATP.

Belongs to the MurCDEF family.

The protein resides in the cytoplasm. The enzyme catalyses UDP-N-acetyl-alpha-D-muramoyl-L-alanine + D-glutamate + ATP = UDP-N-acetyl-alpha-D-muramoyl-L-alanyl-D-glutamate + ADP + phosphate + H(+). It participates in cell wall biogenesis; peptidoglycan biosynthesis. Cell wall formation. Catalyzes the addition of glutamate to the nucleotide precursor UDP-N-acetylmuramoyl-L-alanine (UMA). The protein is UDP-N-acetylmuramoylalanine--D-glutamate ligase of Streptococcus pyogenes serotype M28 (strain MGAS6180).